Reading from the N-terminus, the 99-residue chain is Protein translation factor SUI1 homolog (99 aa).

The protein belongs to the SUI1 family.

In Picrophilus torridus (strain ATCC 700027 / DSM 9790 / JCM 10055 / NBRC 100828 / KAW 2/3), this protein is Protein translation factor SUI1 homolog.